Reading from the N-terminus, the 202-residue chain is MSRYRGPRVRIIRRLGALPGLTNKTPQLKSSSINQSTSNKKISQYRIRLEEKQKLRFHYGITERQLLNYVRIARKAKGSTGEILLQLLEMRLDNVIFRLGMTPTIPGARQLVNHRHILVNGYIVDIPSYRCKPQDFITIKNQRKSEAIISKNIEFYQKYKIPNHLTYSSLEKKGLVNQILNRKSIGLKINELLVVEYYSRQA.

Positions 90 to 153 (MRLDNVIFRL…KSEAIISKNI (64 aa)) constitute an S4 RNA-binding domain.

This sequence belongs to the universal ribosomal protein uS4 family. Part of the 30S ribosomal subunit. Contacts protein S5. The interaction surface between S4 and S5 is involved in control of translational fidelity.

The protein resides in the plastid. The protein localises to the chloroplast. Its function is as follows. One of the primary rRNA binding proteins, it binds directly to 16S rRNA where it nucleates assembly of the body of the 30S subunit. With S5 and S12 plays an important role in translational accuracy. This is Small ribosomal subunit protein uS4c (rps4) from Hypopterygium laricinum (Moss).